A 459-amino-acid chain; its full sequence is DNA polymerase subunit gamma-2 (459 aa).

Heterotrimer composed of a catalytic subunit and a homodimer of accessory subunits (POLG:POLG2).

Its subcellular location is the mitochondrion. The protein resides in the mitochondrion matrix. It localises to the mitochondrion nucleoid. Functionally, accessory subunit of DNA polymerase gamma solely responsible for replication of mitochondrial DNA (mtDNA). Acts as an allosteric regulator of the holoenzyme activities. Enhances the polymerase activity and the processivity of POLG by increasing its interactions with the DNA template. Suppresses POLG exonucleolytic proofreading especially toward homopolymeric templates bearing mismatched termini. Binds to single-stranded DNA. The polypeptide is DNA polymerase subunit gamma-2 (Polg2) (Mus musculus (Mouse)).